The primary structure comprises 158 residues: Protein BTG2 (158 aa).

Position 147 is a phosphoserine; by MAPK1 and MAPK3 (serine 147). Serine 149 carries the phosphoserine; by MAPK14 modification.

It belongs to the BTG family. In terms of assembly, interacts with PRKCABP. Interacts with CNOT7 and CNOT8; indicative for an association with the CCR4-NOT complex. Interacts with PIN1, inducing mitochondrial depolarization. In terms of processing, phosphorylated at Ser-147 by MAPK1/ERK2 and MAPK3/ERK1, and at Ser-149 by MAPK14, leading to PIN1-binding and mitochondrial depolarization. As to expression, in brain at embryonic day 13.5, placenta, amnion, and spleen, which are proliferating and/or differentiating.

Functionally, anti-proliferative protein; the function is mediated by association with deadenylase subunits of the CCR4-NOT complex. Activates mRNA deadenylation in a CNOT6 and CNOT7-dependent manner. In vitro can inhibit deadenylase activity of CNOT7 and CNOT8. Involved in cell cycle regulation. Could be involved in the growth arrest and differentiation of the neuronal precursors. Modulates transcription regulation mediated by ESR1. Involved in mitochondrial depolarization and neurite outgrowth. This chain is Protein BTG2 (Btg2), found in Rattus norvegicus (Rat).